The following is a 115-amino-acid chain: Large ribosomal subunit protein bL19 (115 aa).

This sequence belongs to the bacterial ribosomal protein bL19 family.

In terms of biological role, this protein is located at the 30S-50S ribosomal subunit interface and may play a role in the structure and function of the aminoacyl-tRNA binding site. In Koribacter versatilis (strain Ellin345), this protein is Large ribosomal subunit protein bL19.